Reading from the N-terminus, the 305-residue chain is tRNA pseudouridine synthase B (305 aa).

Residue Asp-39 is the Nucleophile of the active site.

This sequence belongs to the pseudouridine synthase TruB family. Type 1 subfamily.

It catalyses the reaction uridine(55) in tRNA = pseudouridine(55) in tRNA. In terms of biological role, responsible for synthesis of pseudouridine from uracil-55 in the psi GC loop of transfer RNAs. The chain is tRNA pseudouridine synthase B from Staphylococcus aureus (strain MW2).